The primary structure comprises 160 residues: 2-C-methyl-D-erythritol 2,4-cyclodiphosphate synthase (160 aa).

Asp9 and His11 together coordinate a divalent metal cation. 4-CDP-2-C-methyl-D-erythritol 2-phosphate-binding positions include 9 to 11 (DVH) and 35 to 36 (HS). An a divalent metal cation-binding site is contributed by His43. Residues 57 to 59 (DIG), 62 to 66 (FPDTD), 133 to 136 (TTTE), Phe140, and Arg143 contribute to the 4-CDP-2-C-methyl-D-erythritol 2-phosphate site.

This sequence belongs to the IspF family. In terms of assembly, homotrimer. The cofactor is a divalent metal cation.

The enzyme catalyses 4-CDP-2-C-methyl-D-erythritol 2-phosphate = 2-C-methyl-D-erythritol 2,4-cyclic diphosphate + CMP. Its pathway is isoprenoid biosynthesis; isopentenyl diphosphate biosynthesis via DXP pathway; isopentenyl diphosphate from 1-deoxy-D-xylulose 5-phosphate: step 4/6. Its function is as follows. Involved in the biosynthesis of isopentenyl diphosphate (IPP) and dimethylallyl diphosphate (DMAPP), two major building blocks of isoprenoid compounds. Catalyzes the conversion of 4-diphosphocytidyl-2-C-methyl-D-erythritol 2-phosphate (CDP-ME2P) to 2-C-methyl-D-erythritol 2,4-cyclodiphosphate (ME-CPP) with a corresponding release of cytidine 5-monophosphate (CMP). The chain is 2-C-methyl-D-erythritol 2,4-cyclodiphosphate synthase from Haemophilus ducreyi (strain 35000HP / ATCC 700724).